The primary structure comprises 80 residues: Large ribosomal subunit protein bL31 (80 aa).

Residues Cys-16, Cys-18, Cys-38, and Cys-41 each coordinate Zn(2+).

The protein belongs to the bacterial ribosomal protein bL31 family. Type A subfamily. Part of the 50S ribosomal subunit. Zn(2+) is required as a cofactor.

Functionally, binds the 23S rRNA. The protein is Large ribosomal subunit protein bL31 of Mycobacterium bovis (strain ATCC BAA-935 / AF2122/97).